The chain runs to 342 residues: MSKAYQQAGVDINAGYEAVERMTSHVQRTMRKEVLGGLGGFGATFDLSQLNMKAPLLVSGTDGVGTKLKLAIDNDKHDTIGIDAVAMCVNDILTTGAEPLYFLDYIATNKVVPEVIEQIVKGVSDGCEETNTALIGGETAEMGEMYHEGEYDLAGFAVGAVEKDDYIDGSSVEPGQAIIGLESSGIHSNGYSLVRKLIQQSGIKLSEPFNQEQTFLDAFLKPTRLYVKPVLAVKSSIKIYAMTHITGGGFYENIPRALPEGITAKIDVTQFPTPAIFDWLQEQGNISTDEMYNIFNMGIGFTLVVDNNQVESTLEILNGQNIKAYKIGETVKGNEPIQLTGV.

This sequence belongs to the AIR synthase family.

It is found in the cytoplasm. The enzyme catalyses 2-formamido-N(1)-(5-O-phospho-beta-D-ribosyl)acetamidine + ATP = 5-amino-1-(5-phospho-beta-D-ribosyl)imidazole + ADP + phosphate + H(+). The protein operates within purine metabolism; IMP biosynthesis via de novo pathway; 5-amino-1-(5-phospho-D-ribosyl)imidazole from N(2)-formyl-N(1)-(5-phospho-D-ribosyl)glycinamide: step 2/2. The protein is Phosphoribosylformylglycinamidine cyclo-ligase of Staphylococcus saprophyticus subsp. saprophyticus (strain ATCC 15305 / DSM 20229 / NCIMB 8711 / NCTC 7292 / S-41).